The chain runs to 193 residues: Small ribosomal subunit protein uS7 (193 aa).

It belongs to the universal ribosomal protein uS7 family. In terms of assembly, part of the 30S ribosomal subunit.

One of the primary rRNA binding proteins, it binds directly to 16S rRNA where it nucleates assembly of the head domain of the 30S subunit. Is located at the subunit interface close to the decoding center. This Saccharolobus solfataricus (strain ATCC 35092 / DSM 1617 / JCM 11322 / P2) (Sulfolobus solfataricus) protein is Small ribosomal subunit protein uS7.